The sequence spans 237 residues: Ribosomal RNA small subunit methyltransferase G (237 aa).

S-adenosyl-L-methionine contacts are provided by residues G78, F83, 129-130 (AE), and R148.

It belongs to the methyltransferase superfamily. RNA methyltransferase RsmG family.

Its subcellular location is the cytoplasm. Functionally, specifically methylates the N7 position of a guanine in 16S rRNA. The chain is Ribosomal RNA small subunit methyltransferase G from Streptococcus pyogenes serotype M18 (strain MGAS8232).